The primary structure comprises 413 residues: Intracellular hyaluronan-binding protein 4 (413 aa).

2 positions are modified to phosphoserine: Ser-7 and Ser-36. Residues 40 to 64 (DILREAERRRQQQLQRKRRDEAAAA) are a coiled coil. Positions 42–206 (LREAERRRQQ…RGGPGNRVFD (165 aa)) are disordered. Residues 62–82 (AAAAGAGPRGGRSPAGASGHR) show a composition bias toward low complexity. At Arg-70 the chain carries Omega-N-methylarginine. Phosphoserine is present on Ser-74. Over residues 87–97 (GRRESQKERKS) the composition is skewed to basic and acidic residues. Position 108 is a phosphoserine (Ser-108). Positions 139 to 182 (MLERAERRSYREYRPYETERQADFTAEKFPDEKPGDRFDRDRPL) are enriched in basic and acidic residues. The segment covering 184-201 (GRGGPRGGMRGRGRGGPG) has biased composition (gly residues). Residues Lys-213 and Lys-276 each participate in a glycyl lysine isopeptide (Lys-Gly) (interchain with G-Cter in SUMO1); alternate cross-link. Residues Lys-213 and Lys-276 each participate in a glycyl lysine isopeptide (Lys-Gly) (interchain with G-Cter in SUMO2); alternate cross-link. The disordered stretch occupies residues 227 to 320 (VRTEDNMGGC…IRKPESTVPS (94 aa)). Over residues 294-315 (DEWKNLQEQTRPKPEFNIRKPE) the composition is skewed to basic and acidic residues. Lys-336 is covalently cross-linked (Glycyl lysine isopeptide (Lys-Gly) (interchain with G-Cter in SUMO1); alternate). Lys-336 is covalently cross-linked (Glycyl lysine isopeptide (Lys-Gly) (interchain with G-Cter in SUMO2); alternate). 2 positions are modified to phosphothreonine; by PKC: Thr-354 and Thr-375. The disordered stretch occupies residues 360–413 (NFGNLPRPGRGARGGTRGGRGRIRRAENYGPRAEVVMQDVAPNPDDPEDFPALS). Residues 404-413 (DDPEDFPALS) show a composition bias toward acidic residues.

Belongs to the SERBP1-HABP4 family. Associates with ribosomes; promoting ribosome stabilization. Interacts with EEF2/eEF2; promoting ribosome stabilization. Interacts with FMR1. Interacts with FXR1 and FXR2. Interacts with CHD3 (via C-terminus). Interacts (via C-terminus) with RACK1. Interacts with p53/TP53. Interacts (via N-terminus) with SRSF9; this interaction is direct. Interacts with SYNCRIP; this interaction is direct. Interacts with MEF2C (via N-terminus); this interaction decreases DNA-binding activity of MEF2C in myocardial cells in response to mechanical stress. Interacts with PRMT1 (via N-terminus). Interacts with SPIN1. Methylated. Methylation is decreased by phorbol 12-myristate 13-acetate (PMA)-activated PKC, in vitro. In terms of processing, phosphorylated by phorbol 12-myristate 13-acetate (PMA)-activated PKC isoforms at Thr-354 and Thr-375. Highly expressed in brain, heart, and kidney, and moderately expressed in skeletal muscle. Also expressed in a variety of tumor cell lines and in activated but not resting leukocytes.

It is found in the nucleus. It localises to the cytoplasm. Its subcellular location is the stress granule. The protein resides in the sarcoplasm. The protein localises to the nuclear body. It is found in the nucleolus. It localises to the nucleus speckle. Its subcellular location is the cajal body. The protein resides in the gem. In terms of biological role, ribosome-binding protein that promotes ribosome hibernation, a process during which ribosomes are stabilized in an inactive state and preserved from proteasomal degradation. Acts via its association with EEF2/eEF2 factor at the A-site of the ribosome, promoting ribosome stabilization in an inactive state compatible with storage. Plays a key role in ribosome hibernation in the mature oocyte by promoting ribosome stabilization. Ribosomes, which are produced in large quantities during oogenesis, are stored and translationally repressed in the oocyte and early embryo. Also binds RNA, regulating transcription and pre-mRNA splicing. Binds (via C-terminus) to poly(U) RNA. Seems to play a role in PML-nuclear bodies formation. Negatively regulates DNA-binding activity of the transcription factor MEF2C in myocardial cells in response to mechanical stress. The sequence is that of Intracellular hyaluronan-binding protein 4 from Homo sapiens (Human).